The primary structure comprises 185 residues: Large ribosomal subunit protein uL5 (185 aa).

Belongs to the universal ribosomal protein uL5 family. In terms of assembly, part of the 50S ribosomal subunit; part of the 5S rRNA/L5/L18/L25 subcomplex. Contacts the 5S rRNA and the P site tRNA. Forms a bridge to the 30S subunit in the 70S ribosome.

In terms of biological role, this is one of the proteins that bind and probably mediate the attachment of the 5S RNA into the large ribosomal subunit, where it forms part of the central protuberance. In the 70S ribosome it contacts protein S13 of the 30S subunit (bridge B1b), connecting the 2 subunits; this bridge is implicated in subunit movement. Contacts the P site tRNA; the 5S rRNA and some of its associated proteins might help stabilize positioning of ribosome-bound tRNAs. This is Large ribosomal subunit protein uL5 from Nitrobacter hamburgensis (strain DSM 10229 / NCIMB 13809 / X14).